The following is a 706-amino-acid chain: Centrosomal protein kizuna (706 aa).

The stretch at 63–113 forms a coiled coil; it reads QRAKTRNLELLGNVENLASKLKEFSIDCSRLLQKRMEYKNHITRLKKDRRK. Residues 105-116 are compositionally biased toward basic residues; that stretch reads TRLKKDRRKMGS. Disordered stretches follow at residues 105-184, 215-347, 571-603, 620-665, and 677-706; these read TRLK…LCMH, VREK…ASRG, EIKP…QSPV, SVAQ…KTKP, and ESDD…DFYD. Basic and acidic residues predominate over residues 118–127; it reads GKSEADEHPS. Polar residues-rich tracts occupy residues 128 to 156 and 164 to 180; these read RLST…NDGA and HTEQ…SQSG. Residues 215–251 are compositionally biased toward basic and acidic residues; the sequence is VREKQMESDWDISQRAREQQRQEELKSPHTTLKEAEV. Positions 272-283 are enriched in low complexity; the sequence is TRSPSPDTTDPS. Residues 293 to 304 show a composition bias toward acidic residues; sequence GEDEEESAEDKD. Over residues 308-320 the composition is skewed to polar residues; it reads PINQNHSDYTSNI. The segment covering 586 to 598 has biased composition (acidic residues); the sequence is EEQEIQSAEEDSA. Over residues 638–648 the composition is skewed to basic and acidic residues; sequence PDAHKLEKPEV.

This sequence belongs to the kizuna family.

It localises to the cytoplasm. Its subcellular location is the cytoskeleton. The protein resides in the microtubule organizing center. It is found in the centrosome. The protein localises to the cilium basal body. Functionally, centrosomal protein required for establishing a robust mitotic centrosome architecture that can endure the forces that converge on the centrosomes during spindle formation. Required for stabilizing the expanded pericentriolar material around the centriole. This is Centrosomal protein kizuna (kiz) from Danio rerio (Zebrafish).